Consider the following 31-residue polypeptide: Cytochrome b6-f complex subunit 6 (31 aa).

The chain crosses the membrane as a helical span at residues 4 to 26 (LTSYFGFLLAALTITSALFIGLN).

Belongs to the PetL family. In terms of assembly, the 4 large subunits of the cytochrome b6-f complex are cytochrome b6, subunit IV (17 kDa polypeptide, PetD), cytochrome f and the Rieske protein, while the 4 small subunits are PetG, PetL, PetM and PetN. The complex functions as a dimer.

It is found in the plastid. The protein resides in the chloroplast thylakoid membrane. Component of the cytochrome b6-f complex, which mediates electron transfer between photosystem II (PSII) and photosystem I (PSI), cyclic electron flow around PSI, and state transitions. PetL is important for photoautotrophic growth as well as for electron transfer efficiency and stability of the cytochrome b6-f complex. This Blitum bonus-henricus (Good King Henry) protein is Cytochrome b6-f complex subunit 6.